The following is a 524-amino-acid chain: Apoptosis inhibitor 5 (524 aa).

The tract at residues 2–360 is ARM-like and Heat-like helical repeats; that stretch reads PTVEELYRNY…HQLGRKLPDF (359 aa). Lys-251 bears the N6-acetyllysine mark. Positions 370–391 are leucine-zipper; that stretch reads LKDFKIRLQYFARGLQVYIRQL. Phosphothreonine is present on Thr-399. Positions 452–524 are disordered; that stretch reads GQKRASEDTT…RGNRSRGRLY (73 aa). The Nuclear localization signal signature appears at 454 to 475; sequence KRASEDTTSGSPPKKSSAGPKR. Ser-462, Ser-464, and Ser-469 each carry phosphoserine. The segment covering 462–472 has biased composition (low complexity); the sequence is SGSPPKKSSAG. The span at 487 to 497 shows a compositional bias: polar residues; it reads KYSSNLGNFNY. At Arg-500 the chain carries Omega-N-methylarginine.

It belongs to the API5 family. Monomer. Interacts with FGF2 and ACIN1. Post-translationally, acetylation at Lys-251 impairs antiapoptotic function. In terms of tissue distribution, expressed in all tissues tested, including heart, brain, placenta, lung, liver, skeletal muscle, kidney and pancreas. Highest levels in heart, pancreas and placenta. Highly expressed in several cancers. Preferentially expressed in squamous cell carcinoma versus adenocarcinoma in non-small cell lung cancer.

The protein localises to the nucleus. It localises to the cytoplasm. Its function is as follows. Antiapoptotic factor that may have a role in protein assembly. Negatively regulates ACIN1. By binding to ACIN1, it suppresses ACIN1 cleavage from CASP3 and ACIN1-mediated DNA fragmentation. Also known to efficiently suppress E2F1-induced apoptosis. Its depletion enhances the cytotoxic action of the chemotherapeutic drugs. In Homo sapiens (Human), this protein is Apoptosis inhibitor 5.